A 132-amino-acid chain; its full sequence is Small ribosomal subunit protein uS12 (132 aa).

Asp89 carries the post-translational modification 3-methylthioaspartic acid. Residues 101 to 132 (TLDASGAAGPSSTNKATRNRKRSKYGVKRPKA) form a disordered region. The segment covering 117–132 (TRNRKRSKYGVKRPKA) has biased composition (basic residues).

The protein belongs to the universal ribosomal protein uS12 family. Part of the 30S ribosomal subunit. Contacts proteins S8 and S17. May interact with IF1 in the 30S initiation complex.

Functionally, with S4 and S5 plays an important role in translational accuracy. Interacts with and stabilizes bases of the 16S rRNA that are involved in tRNA selection in the A site and with the mRNA backbone. Located at the interface of the 30S and 50S subunits, it traverses the body of the 30S subunit contacting proteins on the other side and probably holding the rRNA structure together. The combined cluster of proteins S8, S12 and S17 appears to hold together the shoulder and platform of the 30S subunit. This Sorangium cellulosum (strain So ce56) (Polyangium cellulosum (strain So ce56)) protein is Small ribosomal subunit protein uS12.